The primary structure comprises 1284 residues: Peroxisomal ATPase PEX1 (1284 aa).

A disordered region spans residues 339-373 (SPKQQQDKSKQGVLLPDKEKQLSKSPDHKQISSNR). Basic and acidic residues predominate over residues 343–373 (QQDKSKQGVLLPDKEKQLSKSPDHKQISSNR). ATP is bound by residues 600 to 607 (GGKGSGKS) and 882 to 889 (GPPGTGKT). Phosphoserine occurs at positions 1182, 1210, and 1212. The interval 1261-1284 (FQNPKKRKNQSGTVFRTGQKVTLA) is disordered. Residues 1270 to 1284 (QSGTVFRTGQKVTLA) show a composition bias toward polar residues.

The protein belongs to the AAA ATPase family. Homooligomer; homooligomerizes in the cytosol, interaction with PEX6 promotes dissociation of the homooligomer. Interacts with PEX6; forming the PEX1-PEX6 AAA ATPase complex, which is composed of a heterohexamer formed by a trimer of PEX1-PEX6 dimers. Interacts indirectly with PEX26, via its interaction with PEX6.

The protein resides in the cytoplasm. Its subcellular location is the cytosol. It is found in the peroxisome membrane. The enzyme catalyses ATP + H2O = ADP + phosphate + H(+). Component of the PEX1-PEX6 AAA ATPase complex, a protein dislocase complex that mediates the ATP-dependent extraction of the PEX5 receptor from peroxisomal membranes, an essential step for PEX5 recycling. Specifically recognizes PEX5 monoubiquitinated at 'Cys-11', and pulls it out of the peroxisome lumen through the PEX2-PEX10-PEX12 retrotranslocation channel. Extraction by the PEX1-PEX6 AAA ATPase complex is accompanied by unfolding of the TPR repeats and release of bound cargo from PEX5. This is Peroxisomal ATPase PEX1 from Mus musculus (Mouse).